Reading from the N-terminus, the 621-residue chain is MNYDVIVVGGGHAGIEASLAAAKMGAKTLLITILAEQIGAASCNPAIGGLAKGHLVKEIDALGGQMGLTTDACGIQFRLLNESKGPAVRGSRAQIDMDRYRVYMRNLLLNTPNLEVTQEIATEILTKDNNIIGVKTHLDNNYGTKKLIITTGTFLNGLIHVGFNKLEAGRVGELSSKSLSASLKSLNLEMGRLKTGTCPRVLAKSIDFSVLERQDGDQDPTPFSFRTKEFNKTQLPCYIAYTNEKTHEIIRSNFDRAPLFTGQIEGIGPRYCPSIEDKINRFGDRERHHLFIEPQTREATEYYINGFSTSLPYDAQVEMLRSVKGFQNAKIVRHGYAIEYDYVSPTELKHTLETKKINGLYLAGQINGTTGYEEAAAQGLMAGINAALNLKTREPLILRRDESYIGVLIDDLVTKGTKEPYRMFTSRAEYRLLLREDNANLRLSKYGYNVGLLPKEAFEEMLKLKSNLEKGMEILLTKDMSPNKENLEFLASIDEDIINEKVPLQKIAARKSFTIEKLRKLNEFFLNLDDKSLNQILTEAKYYHYIAQQQIEVEKMKGLLDIKIPKSLEFKSISGLSNEVVEKLNKFAPPTLAAASNISGITPVAIDILHIAIKYHCQKTK.

9 to 14 (GGGHAG) is a binding site for FAD. Residue 268 to 282 (GPRYCPSIEDKINRF) participates in NAD(+) binding.

This sequence belongs to the MnmG family. Homodimer. Heterotetramer of two MnmE and two MnmG subunits. Requires FAD as cofactor.

The protein localises to the cytoplasm. Its function is as follows. NAD-binding protein involved in the addition of a carboxymethylaminomethyl (cmnm) group at the wobble position (U34) of certain tRNAs, forming tRNA-cmnm(5)s(2)U34. The polypeptide is tRNA uridine 5-carboxymethylaminomethyl modification enzyme MnmG (Campylobacter fetus subsp. fetus (strain 82-40)).